The following is a 598-amino-acid chain: CBP80/20-dependent translation initiation factor (598 aa).

Met-1 bears the N-acetylmethionine mark. The span at 1–18 (MENSSAASASSEAGSSRS) shows a compositional bias: low complexity. Disordered regions lie at residues 1-20 (MENS…RSQE), 43-90 (DKTE…SKDN), and 180-336 (IAHT…RIGE). Residues 1-305 (MENSSAASAS…APRSPDTLAP (305 aa)) are interaction with NCBP1/CBP80. Ser-18 carries the post-translational modification Phosphoserine. A compositionally biased stretch (basic and acidic residues) spans 43 to 55 (DKTEGDGESERTQ). The segment covering 56 to 75 (SHISQWTADCSEPLDSSCSF) has biased composition (polar residues). Over residues 183 to 198 (TKKLFRRRRNDRRRQQ) the composition is skewed to basic residues. A compositionally biased stretch (basic and acidic residues) spans 258–272 (PPGDKGEAGAHRNAK). A Phosphothreonine modification is found at Thr-289. Phosphoserine is present on Ser-299. Basic and acidic residues predominate over residues 321-336 (VETKRKDSILPERIGE). The MIF4G domain occupies 376–577 (IEILNSMRNN…LEVIELHANS (202 aa)).

This sequence belongs to the CTIF family. In terms of assembly, interacts with NCBP1/CBP80; the interaction is direct. Associates with the eukaryotic translation initiation factor 3 (eIF-3) complex. Widely expressed.

It is found in the cytoplasm. The protein resides in the perinuclear region. Specifically required for the pioneer round of mRNA translation mediated by the cap-binding complex (CBC), that takes place during or right after mRNA export via the nuclear pore complex (NPC). Acts via its interaction with the NCBP1/CBP80 component of the CBC complex and recruits the 40S small subunit of the ribosome via eIF3. In contrast, it is not involved in steady state translation, that takes place when the CBC complex is replaced by cytoplasmic cap-binding protein eIF4E. Also required for nonsense-mediated mRNA decay (NMD), the pioneer round of mRNA translation mediated by the cap-binding complex playing a central role in nonsense-mediated mRNA decay (NMD). This Homo sapiens (Human) protein is CBP80/20-dependent translation initiation factor (CTIF).